The sequence spans 403 residues: Lissencephaly-1 homolog 1 (403 aa).

In terms of domain architecture, LisH spans 7–38 (QRDELNQAIHQYLLISYQQSAQLFKTEAAVKD). A coiled-coil region spans residues 51–87 (NSIVRLSKRVITLEQQVEQLNEQLAQAQAGKIQFNKS). WD repeat units follow at residues 103–142 (GHRA…FEKT), 145–184 (GHTS…CVKT), 187–226 (GHEH…CKKT), 229–270 (EHQE…HQLS), 271–327 (GHEH…NLFT), 330–369 (GHDN…QKKK), and 373–403 (AHDK…WLLS).

It belongs to the WD repeat LIS1/nudF family.

The protein resides in the cytoplasm. It is found in the cytoskeleton. It localises to the microtubule organizing center. The protein localises to the centrosome. Functionally, positively regulates the activity of the minus-end directed microtubule motor protein dynein. May enhance dynein-mediated microtubule sliding by targeting dynein to the microtubule plus end. Required for several dynein- and microtubule-dependent processes. In Paramecium tetraurelia, this protein is Lissencephaly-1 homolog 1.